The sequence spans 307 residues: Protoheme IX farnesyltransferase (307 aa).

Transmembrane regions (helical) follow at residues 38 to 58 (NTLT…LSVL), 65 to 85 (FFTI…NNYI), 108 to 128 (PGFA…FLLL), 131 to 151 (PMAV…YSLW), 158 to 178 (LNTV…WAAI), 186 to 206 (IAWM…LALA), 251 to 271 (LGIT…VLGF), and 287 to 307 (FVYS…VTFF).

The protein belongs to the UbiA prenyltransferase family. Protoheme IX farnesyltransferase subfamily. Interacts with CtaA.

It localises to the cell membrane. The enzyme catalyses heme b + (2E,6E)-farnesyl diphosphate + H2O = Fe(II)-heme o + diphosphate. It functions in the pathway porphyrin-containing compound metabolism; heme O biosynthesis; heme O from protoheme: step 1/1. In terms of biological role, converts heme B (protoheme IX) to heme O by substitution of the vinyl group on carbon 2 of heme B porphyrin ring with a hydroxyethyl farnesyl side group. The protein is Protoheme IX farnesyltransferase of Bacillus thuringiensis (strain Al Hakam).